The following is a 712-amino-acid chain: Methionine--tRNA ligase (712 aa).

Residues 20–30 (PYANGKAHIGH) carry the 'HIGH' region motif. Cysteine 151, cysteine 154, cysteine 163, and cysteine 167 together coordinate Zn(2+). The 'KMSKS' region signature appears at 334–338 (KFSKT). Lysine 337 contributes to the ATP binding site. Positions 559–585 (ANAKKSAAKGGEKEPSKSEGMGPSEEA) are disordered. The region spanning 610–712 (DFAKLDIRVG…KEIKPGSRIR (103 aa)) is the tRNA-binding domain.

Belongs to the class-I aminoacyl-tRNA synthetase family. MetG type 1 subfamily. Homodimer. It depends on Zn(2+) as a cofactor.

The protein localises to the cytoplasm. It carries out the reaction tRNA(Met) + L-methionine + ATP = L-methionyl-tRNA(Met) + AMP + diphosphate. Its function is as follows. Is required not only for elongation of protein synthesis but also for the initiation of all mRNA translation through initiator tRNA(fMet) aminoacylation. In Methanosarcina acetivorans (strain ATCC 35395 / DSM 2834 / JCM 12185 / C2A), this protein is Methionine--tRNA ligase.